Consider the following 245-residue polypeptide: Uridylate kinase (245 aa).

15–18 (KLSG) serves as a coordination point for ATP. Residues 23 to 28 (GDEGFG) are involved in allosteric activation by GTP. Gly57 serves as a coordination point for UMP. Gly58 and Arg62 together coordinate ATP. UMP-binding positions include Asp77 and 138-145 (TGNPFCTT). The ATP site is built by Thr165, Tyr171, and Asp174.

This sequence belongs to the UMP kinase family. Homohexamer.

Its subcellular location is the cytoplasm. The enzyme catalyses UMP + ATP = UDP + ADP. Its pathway is pyrimidine metabolism; CTP biosynthesis via de novo pathway; UDP from UMP (UMPK route): step 1/1. With respect to regulation, allosterically activated by GTP. Inhibited by UTP. Functionally, catalyzes the reversible phosphorylation of UMP to UDP. The protein is Uridylate kinase of Shewanella baltica (strain OS155 / ATCC BAA-1091).